Reading from the N-terminus, the 102-residue chain is Small ribosomal subunit protein uS10 (102 aa).

The protein belongs to the universal ribosomal protein uS10 family. In terms of assembly, part of the 30S ribosomal subunit.

Functionally, involved in the binding of tRNA to the ribosomes. This Tropheryma whipplei (strain TW08/27) (Whipple's bacillus) protein is Small ribosomal subunit protein uS10.